Reading from the N-terminus, the 248-residue chain is 1-(5-phosphoribosyl)-5-[(5-phosphoribosylamino)methylideneamino] imidazole-4-carboxamide isomerase (248 aa).

D8 (proton acceptor) is an active-site residue. D131 serves as the catalytic Proton donor.

Belongs to the HisA/HisF family.

The protein resides in the cytoplasm. The enzyme catalyses 1-(5-phospho-beta-D-ribosyl)-5-[(5-phospho-beta-D-ribosylamino)methylideneamino]imidazole-4-carboxamide = 5-[(5-phospho-1-deoxy-D-ribulos-1-ylimino)methylamino]-1-(5-phospho-beta-D-ribosyl)imidazole-4-carboxamide. The protein operates within amino-acid biosynthesis; L-histidine biosynthesis; L-histidine from 5-phospho-alpha-D-ribose 1-diphosphate: step 4/9. The chain is 1-(5-phosphoribosyl)-5-[(5-phosphoribosylamino)methylideneamino] imidazole-4-carboxamide isomerase from Paracidovorax citrulli (strain AAC00-1) (Acidovorax citrulli).